Here is a 263-residue protein sequence, read N- to C-terminus: tRNA (guanine-N(1)-)-methyltransferase (263 aa).

S-adenosyl-L-methionine contacts are provided by residues glycine 124 and 144–149 (LGDFVL).

The protein belongs to the RNA methyltransferase TrmD family. In terms of assembly, homodimer.

It localises to the cytoplasm. It carries out the reaction guanosine(37) in tRNA + S-adenosyl-L-methionine = N(1)-methylguanosine(37) in tRNA + S-adenosyl-L-homocysteine + H(+). Its function is as follows. Specifically methylates guanosine-37 in various tRNAs. This Aromatoleum aromaticum (strain DSM 19018 / LMG 30748 / EbN1) (Azoarcus sp. (strain EbN1)) protein is tRNA (guanine-N(1)-)-methyltransferase.